The primary structure comprises 112 residues: Large ribosomal subunit protein uL24 (112 aa).

Belongs to the universal ribosomal protein uL24 family. Part of the 50S ribosomal subunit.

One of two assembly initiator proteins, it binds directly to the 5'-end of the 23S rRNA, where it nucleates assembly of the 50S subunit. Its function is as follows. One of the proteins that surrounds the polypeptide exit tunnel on the outside of the subunit. This Desulfitobacterium hafniense (strain Y51) protein is Large ribosomal subunit protein uL24.